Reading from the N-terminus, the 787-residue chain is ER degradation-enhancing alpha-mannosidase-like protein 1 (787 aa).

An N-terminal signal peptide occupies residues 1 to 22; that stretch reads MGSLHSIFCVCLILLCIFKENS. N-linked (GlcNAc...) asparagine glycans are attached at residues Asn-479, Asn-609, Asn-670, Asn-693, and Asn-756.

This sequence belongs to the glycosyl hydrolase 47 family.

It is found in the endoplasmic reticulum lumen. Alpha-mannosidase-like protein involved in endoplasmic reticulum-associated degradation (ERAD). Delivers misfolded glycoproteins to proteasomes. It lacks mannosidase activity. This chain is ER degradation-enhancing alpha-mannosidase-like protein 1 (mnl1), found in Schizosaccharomyces pombe (strain 972 / ATCC 24843) (Fission yeast).